The sequence spans 1179 residues: DNA-directed RNA polymerase subunit beta (1179 aa).

It belongs to the RNA polymerase beta chain family. As to quaternary structure, the RNAP catalytic core consists of 2 alpha, 1 beta, 1 beta' and 1 omega subunit. When a sigma factor is associated with the core the holoenzyme is formed, which can initiate transcription.

The catalysed reaction is RNA(n) + a ribonucleoside 5'-triphosphate = RNA(n+1) + diphosphate. DNA-dependent RNA polymerase catalyzes the transcription of DNA into RNA using the four ribonucleoside triphosphates as substrates. This is DNA-directed RNA polymerase subunit beta from Oceanobacillus iheyensis (strain DSM 14371 / CIP 107618 / JCM 11309 / KCTC 3954 / HTE831).